We begin with the raw amino-acid sequence, 150 residues long: Arginine repressor (150 aa).

The protein belongs to the ArgR family.

The protein resides in the cytoplasm. It participates in amino-acid biosynthesis; L-arginine biosynthesis [regulation]. In terms of biological role, regulates arginine biosynthesis genes. In Ruminiclostridium cellulolyticum (strain ATCC 35319 / DSM 5812 / JCM 6584 / H10) (Clostridium cellulolyticum), this protein is Arginine repressor.